Here is a 34-residue protein sequence, read N- to C-terminus: Phalloidin proprotein (34 aa).

A propeptide spanning residues 1–10 (MSDINTTCLP) is cleaved from the precursor. A cross-link (cyclopeptide (Ala-Pro)) is located at residues 11–17 (AWLATCP). Positions 12–16 (WLATC) form a cross-link, 2'-cysteinyl-6'-hydroxytryptophan sulfoxide (Trp-Cys). Positions 18–34 (CTGDDVNPTLTCGESLC) are excised as a propeptide.

This sequence belongs to the MSDIN fungal toxin family. In terms of processing, processed by the macrocyclase-peptidase enzyme POPB to yield a toxic cyclic heptapeptide. POPB first removes 10 residues from the N-terminus. Conformational trapping of the remaining peptide forces the enzyme to release this intermediate rather than proceed to macrocyclization. The enzyme rebinds the remaining peptide in a different conformation and catalyzes macrocyclization of the N-terminal 7 residues.

Functionally, toxin that belongs to the bicyclic heptapeptides called phallotoxins. Although structurally related to amatoxins, phallotoxins have a different mode of action, which is the stabilization of F-actin. Phallotoxins are poisonous when administered parenterally, but not orally because of poor absorption. The protein is Phalloidin proprotein of Amanita phalloides (Death cap).